A 59-amino-acid chain; its full sequence is Large ribosomal subunit protein bL35 (59 aa).

Residues 17–43 show a composition bias toward basic residues; the sequence is GQIKRKHAYTSHLAPHKSTKQKRHLRK. The segment at 17–47 is disordered; sequence GQIKRKHAYTSHLAPHKSTKQKRHLRKQATV.

This sequence belongs to the bacterial ribosomal protein bL35 family.

This is Large ribosomal subunit protein bL35 from Mycoplasma genitalium (strain ATCC 33530 / DSM 19775 / NCTC 10195 / G37) (Mycoplasmoides genitalium).